We begin with the raw amino-acid sequence, 368 residues long: RAB6-interacting golgin (368 aa).

3 disordered regions span residues 1–43 (MAQD…REKA), 55–133 (DGSA…DCKV), and 302–368 (KQMA…AVAT). Basic and acidic residues predominate over residues 11–27 (EELRRLKQNKDPFEPQR). The segment covering 80–89 (SPSPVAPSPL) has biased composition (pro residues). Residues 114-133 (NSHHGHKSAEVRAPKPDCKV) are compositionally biased toward basic and acidic residues. Residues 145–310 (RWEVLQQEQR…AKQMASVERL (166 aa)) adopt a coiled-coil conformation. The interval 188–368 (IQKELQALDD…AKNFSAAVAT (181 aa)) is necessary for interaction with RCHY1.

The protein belongs to the GORAB family. Interacts with RCHY1. Interacts with SCYL1 and RAB6A/RAB6. In terms of tissue distribution, expressed in small intestine, kidney, skeletal muscle, lung, spleen, brain and heart. High expression is observed in osteoblasts and skin; also expressed in osteoclasts albeit at lower levels.

Its subcellular location is the cytoplasm. The protein localises to the golgi apparatus. The polypeptide is RAB6-interacting golgin (Gorab) (Mus musculus (Mouse)).